A 178-amino-acid polypeptide reads, in one-letter code: Fatty-acid and retinol-binding protein 1 (178 aa).

A signal peptide spans 1 to 16 (MYHRLILLALVGTTMA). Coiled coils occupy residues 67–89 (DAAL…ELRN) and 130–153 (KQAA…ELKV).

This sequence belongs to the fatty-acid and retinol-binding protein (FARBP) family. In terms of processing, not glycosylated.

It localises to the secreted. Functionally, binds retinol. Also binds the fluorescent fatty acid 11-((5-dimethylaminonaphthalene-1-sulfonyl)amino)undecanoic acid (DAUDA). The long chain fatty acid oleic acid can act competitively to displace bound DAUDA and retinol. The sequence is that of Fatty-acid and retinol-binding protein 1 from Brugia malayi (Filarial nematode worm).